Here is a 549-residue protein sequence, read N- to C-terminus: Chaperonin GroEL 2 (549 aa).

Residues 29–32 (TLGP), Lys50, 86–90 (DGTTT), Gly414, 477–479 (NAA), and Asp493 each bind ATP.

The protein belongs to the chaperonin (HSP60) family. In terms of assembly, forms a cylinder of 14 subunits composed of two heptameric rings stacked back-to-back. Interacts with the co-chaperonin GroES.

It is found in the cytoplasm. It catalyses the reaction ATP + H2O + a folded polypeptide = ADP + phosphate + an unfolded polypeptide.. In terms of biological role, together with its co-chaperonin GroES, plays an essential role in assisting protein folding. The GroEL-GroES system forms a nano-cage that allows encapsulation of the non-native substrate proteins and provides a physical environment optimized to promote and accelerate protein folding. This chain is Chaperonin GroEL 2, found in Myxococcus xanthus (strain DK1622).